We begin with the raw amino-acid sequence, 192 residues long: MTEQTIDNILPASKNNVKQWYVVHTASGAEKRIKEDILRKIAKQKMTDFFEDILIPVFGVSEVKRGKNVKVEKKLMPSYILIKMNMTDKSWHLVKNIPGVTGFLGSKIVPKALTESEIQNIFNNLEAEAKVAKNSKLYEVGEIVTVTDGPFETFMGTVEAIDKARNRLKVSVSIFGKATPIELNFNQVKKSD.

This sequence belongs to the NusG family.

Its function is as follows. Participates in transcription elongation, termination and antitermination. This chain is Transcription termination/antitermination protein NusG, found in Rickettsia prowazekii (strain Madrid E).